Here is a 614-residue protein sequence, read N- to C-terminus: UvrABC system protein C (614 aa).

The GIY-YIG domain occupies 20-98 (TAPGVYRMYA…IKSLSPRYNV (79 aa)). Positions 207–242 (DELTRELGEQMQAASEALEFEQAARLRDLISSLRSM) constitute a UVR domain.

Belongs to the UvrC family. Interacts with UvrB in an incision complex.

The protein resides in the cytoplasm. In terms of biological role, the UvrABC repair system catalyzes the recognition and processing of DNA lesions. UvrC both incises the 5' and 3' sides of the lesion. The N-terminal half is responsible for the 3' incision and the C-terminal half is responsible for the 5' incision. This is UvrABC system protein C from Stenotrophomonas maltophilia (strain K279a).